The following is a 308-amino-acid chain: Oxygen-dependent coproporphyrinogen-III oxidase (308 aa).

Ser-94 is a binding site for substrate. 2 residues coordinate a divalent metal cation: His-98 and His-108. The active-site Proton donor is His-108. Asn-110–Arg-112 contributes to the substrate binding site. Residues His-147 and His-177 each coordinate a divalent metal cation. The important for dimerization stretch occupies residues Tyr-242–Glu-277. Gly-260–Arg-262 is a substrate binding site.

It belongs to the aerobic coproporphyrinogen-III oxidase family. In terms of assembly, homodimer. The cofactor is a divalent metal cation.

It localises to the cytoplasm. The catalysed reaction is coproporphyrinogen III + O2 + 2 H(+) = protoporphyrinogen IX + 2 CO2 + 2 H2O. The protein operates within porphyrin-containing compound metabolism; protoporphyrin-IX biosynthesis; protoporphyrinogen-IX from coproporphyrinogen-III (O2 route): step 1/1. Involved in the heme biosynthesis. Catalyzes the aerobic oxidative decarboxylation of propionate groups of rings A and B of coproporphyrinogen-III to yield the vinyl groups in protoporphyrinogen-IX. This Yersinia enterocolitica serotype O:8 / biotype 1B (strain NCTC 13174 / 8081) protein is Oxygen-dependent coproporphyrinogen-III oxidase.